The following is a 350-amino-acid chain: DNA polymerase IV (350 aa).

Residues 5 to 181 form the UmuC domain; the sequence is IMHYDMDAFY…KKIKIIPGVG (177 aa). Positions 9 and 99 each coordinate Mg(2+). The active site involves E100.

The protein belongs to the DNA polymerase type-Y family. In terms of assembly, monomer. Mg(2+) is required as a cofactor.

It is found in the cytoplasm. It carries out the reaction DNA(n) + a 2'-deoxyribonucleoside 5'-triphosphate = DNA(n+1) + diphosphate. Poorly processive, error-prone DNA polymerase involved in untargeted mutagenesis. Copies undamaged DNA at stalled replication forks, which arise in vivo from mismatched or misaligned primer ends. These misaligned primers can be extended by PolIV. Exhibits no 3'-5' exonuclease (proofreading) activity. May be involved in translesional synthesis, in conjunction with the beta clamp from PolIII. The chain is DNA polymerase IV from Fusobacterium nucleatum subsp. nucleatum (strain ATCC 25586 / DSM 15643 / BCRC 10681 / CIP 101130 / JCM 8532 / KCTC 2640 / LMG 13131 / VPI 4355).